A 45-amino-acid chain; its full sequence is Cytochrome b559 subunit beta (45 aa).

A helical transmembrane segment spans residues 20-36 (WLAVHTLAVPTVFFLGA). Heme is bound at residue histidine 24.

The protein belongs to the PsbE/PsbF family. Heterodimer of an alpha subunit and a beta subunit. PSII is composed of 1 copy each of membrane proteins PsbA, PsbB, PsbC, PsbD, PsbE, PsbF, PsbH, PsbI, PsbJ, PsbK, PsbL, PsbM, PsbT, PsbX, PsbY, PsbZ, Psb30/Ycf12, peripheral proteins PsbO, CyanoQ (PsbQ), PsbU, PsbV and a large number of cofactors. It forms dimeric complexes. Heme b serves as cofactor.

The protein localises to the cellular thylakoid membrane. Functionally, this b-type cytochrome is tightly associated with the reaction center of photosystem II (PSII). PSII is a light-driven water:plastoquinone oxidoreductase that uses light energy to abstract electrons from H(2)O, generating O(2) and a proton gradient subsequently used for ATP formation. It consists of a core antenna complex that captures photons, and an electron transfer chain that converts photonic excitation into a charge separation. The protein is Cytochrome b559 subunit beta of Trichormus variabilis (strain ATCC 29413 / PCC 7937) (Anabaena variabilis).